A 238-amino-acid polypeptide reads, in one-letter code: Ribosomal RNA small subunit methyltransferase G (238 aa).

Residues Gly77, Phe82, 128 to 129, and Arg147 each bind S-adenosyl-L-methionine; that span reads AE.

This sequence belongs to the methyltransferase superfamily. RNA methyltransferase RsmG family.

It is found in the cytoplasm. Specifically methylates the N7 position of guanine in position 535 of 16S rRNA. This Geobacillus sp. (strain WCH70) protein is Ribosomal RNA small subunit methyltransferase G.